The primary structure comprises 45 residues: Large ribosomal subunit protein bL36 (45 aa).

The segment at 26–45 is disordered; sequence VINKKDPNRKQRQKGPARKK. The span at 35–45 shows a compositional bias: basic residues; sequence KQRQKGPARKK.

This sequence belongs to the bacterial ribosomal protein bL36 family.

The protein is Large ribosomal subunit protein bL36 of Protochlamydia amoebophila (strain UWE25).